The primary structure comprises 192 residues: Probable nicotinate-nucleotide adenylyltransferase (192 aa).

Belongs to the NadD family.

It carries out the reaction nicotinate beta-D-ribonucleotide + ATP + H(+) = deamido-NAD(+) + diphosphate. It participates in cofactor biosynthesis; NAD(+) biosynthesis; deamido-NAD(+) from nicotinate D-ribonucleotide: step 1/1. In terms of biological role, catalyzes the reversible adenylation of nicotinate mononucleotide (NaMN) to nicotinic acid adenine dinucleotide (NaAD). This Staphylococcus haemolyticus (strain JCSC1435) protein is Probable nicotinate-nucleotide adenylyltransferase.